The chain runs to 396 residues: 1-deoxy-D-xylulose 5-phosphate reductoisomerase (396 aa).

The NADPH site is built by Thr-10, Gly-11, Ser-12, Ile-13, Asn-38, and Asn-123. Lys-124 is a 1-deoxy-D-xylulose 5-phosphate binding site. Position 125 (Glu-125) interacts with NADPH. Mn(2+) is bound at residue Asp-149. 1-deoxy-D-xylulose 5-phosphate is bound by residues Ser-150, Glu-151, Ser-185, and His-208. Glu-151 provides a ligand contact to Mn(2+). Gly-214 is a binding site for NADPH. 1-deoxy-D-xylulose 5-phosphate-binding residues include Ser-221, Asn-226, Lys-227, and Glu-230. Glu-230 serves as a coordination point for Mn(2+).

Belongs to the DXR family. It depends on Mg(2+) as a cofactor. The cofactor is Mn(2+).

The catalysed reaction is 2-C-methyl-D-erythritol 4-phosphate + NADP(+) = 1-deoxy-D-xylulose 5-phosphate + NADPH + H(+). The protein operates within isoprenoid biosynthesis; isopentenyl diphosphate biosynthesis via DXP pathway; isopentenyl diphosphate from 1-deoxy-D-xylulose 5-phosphate: step 1/6. In terms of biological role, catalyzes the NADPH-dependent rearrangement and reduction of 1-deoxy-D-xylulose-5-phosphate (DXP) to 2-C-methyl-D-erythritol 4-phosphate (MEP). The sequence is that of 1-deoxy-D-xylulose 5-phosphate reductoisomerase from Shewanella piezotolerans (strain WP3 / JCM 13877).